The sequence spans 83 residues: Exodeoxyribonuclease 7 small subunit (83 aa).

This sequence belongs to the XseB family. As to quaternary structure, heterooligomer composed of large and small subunits.

It is found in the cytoplasm. The enzyme catalyses Exonucleolytic cleavage in either 5'- to 3'- or 3'- to 5'-direction to yield nucleoside 5'-phosphates.. In terms of biological role, bidirectionally degrades single-stranded DNA into large acid-insoluble oligonucleotides, which are then degraded further into small acid-soluble oligonucleotides. The sequence is that of Exodeoxyribonuclease 7 small subunit from Nitrobacter hamburgensis (strain DSM 10229 / NCIMB 13809 / X14).